Reading from the N-terminus, the 661-residue chain is Transketolase (661 aa).

Position 30 (His-30) interacts with substrate. Thiamine diphosphate is bound by residues His-70 and 118–120 (GPL). The disordered stretch occupies residues 99-118 (STTPGHPEFRDTPGVEATTG). Asp-159 provides a ligand contact to Mg(2+). Gly-160 and Asn-189 together coordinate thiamine diphosphate. Mg(2+)-binding residues include Asn-189 and Val-191. The substrate site is built by His-266, Arg-357, and Ser-384. Thiamine diphosphate is bound at residue His-266. Catalysis depends on Glu-411, which acts as the Proton donor. Phe-437 contacts thiamine diphosphate. Residues His-461, Asp-469, and Arg-520 each contribute to the substrate site.

It belongs to the transketolase family. As to quaternary structure, homodimer. Requires Mg(2+) as cofactor. It depends on Ca(2+) as a cofactor. Mn(2+) is required as a cofactor. Co(2+) serves as cofactor. The cofactor is thiamine diphosphate.

It catalyses the reaction D-sedoheptulose 7-phosphate + D-glyceraldehyde 3-phosphate = aldehydo-D-ribose 5-phosphate + D-xylulose 5-phosphate. Its function is as follows. Catalyzes the transfer of a two-carbon ketol group from a ketose donor to an aldose acceptor, via a covalent intermediate with the cofactor thiamine pyrophosphate. This chain is Transketolase (tkt), found in Physarum polycephalum (Slime mold).